Reading from the N-terminus, the 255-residue chain is 20 kDa chaperonin, chloroplastic (255 aa).

The transit peptide at 1–53 (MAATHLTSTSSLTINTLPSFEGLRSASGISKINVSVAYPSFTSRSFRGLVVRA) directs the protein to the chloroplast. Cpn-10 domain stretches follow at residues 54 to 156 (ASIT…ILET) and 157 to 255 (DDVK…AVLS).

It belongs to the GroES chaperonin family. Forms stable complexes with CPN60 in the presence of ATP.

Its subcellular location is the plastid. The protein localises to the chloroplast. Functionally, seems to function only as a co-chaperone, along with cpn60, and in certain cases is essential for the discharge of biologically active proteins from cpn60. In Spinacia oleracea (Spinach), this protein is 20 kDa chaperonin, chloroplastic (CPN21).